We begin with the raw amino-acid sequence, 466 residues long: Magnetosome-associated protein MamJ (466 aa).

Disordered stretches follow at residues 1–23 (MAKNRRDRGTDLPGDGDQKISTG) and 60–80 (ANQGGLVETAQPPSAPIRSQD). The tract at residues 1-24 (MAKNRRDRGTDLPGDGDQKISTGP) is not required to restore magnetic response to deletion mutant. The segment at 25–80 (EIVSVTVHPSPNLAAAAKPVQGDIWASLLESSPWSANQGGLVETAQPPSAPIRSQD) is required to restore magnetic response to deletion mutant. Tandem repeat unit repeat units lie at residues 81 to 168 (PVPV…VEPE) and 169 to 256 (PAPV…VEPE). 4 not required to restore magnetic response to deletion mutant regions span residues 81–256 (PVPV…VEPE), 136–334 (ETDA…SQAE), 333–374 (AESV…AVEA), and 432–466 (VGSNVVAGTRRLAQTIEVSCGSCSSPKCDAEDKNK). Glu-Pro-rich motif repeat units lie at residues 145–164 (IEPEPALVEPVIEIEAEAAE), 233–252 (IEPEPALVEPVIEIEAEAAE), and 253–272 (VEPEPAPVEPVIEIEAEAAE). Required to restore magnetic response to deletion mutant regions lie at residues 375–432 (TRQP…GRLV) and 426–466 (VKGG…DKNK).

It belongs to the magnetosome MamJ protein family. Forms homooligomers. Interacts with MamK. Identified by N-terminal sequencing of a protein that is about 96 kDa in size. The protein runs anomalously on protein gels.

The protein resides in the magnetosome. Required for assembly of magnetosome chains. Regulates the dynamic behavior of MamK filaments. May connect magnetosomes to MamK filaments. Moves from the cell poles towards midcell; movement does not depend on the treadmilling ability of MamK, suggesting MamJ associates and disassociates continuously from the MamK filament. The polypeptide is Magnetosome-associated protein MamJ (Magnetospirillum gryphiswaldense (strain DSM 6361 / JCM 21280 / NBRC 15271 / MSR-1)).